Consider the following 256-residue polypeptide: Spore coat polysaccharide biosynthesis protein SpsA (256 aa).

The cysteines at positions 155 and 243 are disulfide-linked. Aspartate 191 is an active-site residue.

This sequence belongs to the glycosyltransferase 2 family. Monomer in solution.

Its pathway is spore coat biogenesis; spore coat polysaccharide biosynthesis. Glycosyltransferase implicated in the synthesis of the spore coat. The polypeptide is Spore coat polysaccharide biosynthesis protein SpsA (spsA) (Bacillus subtilis (strain 168)).